We begin with the raw amino-acid sequence, 406 residues long: MFSKVRLLLNKELQRQRENICLIASENYVSQDILAVTGSVLTNKYAEGYPSKRFYQGCEVVDESENLAIESCKTLFGAQWANVQPHSGSSANYAVYLALLKPGDTILGLDLNCGGHLTHGSPVNFSGKQYQAVTYSLDFETETLDYDAILQIALEHKPKLIICGFSNYSRTVDFKKFSAIAKQVNAYLLADIAHIAGFIAAGLHQNPLPFVDVVTSTTHKTLRGPRGGIIMSNNQAIIKKLDSGVFPGCQGGPLQHVIAAKYVCFKEALNPKFKQYMQQVKDNALAMANWFLKQGYRVVSKGTETHLFSLVVGNGKDVALWLQKANIVLNMNTIPFETKSAFSPSGIRLGTPAMTTRGFKTNDFIFVASLIDKVIKSNGNQKVISQTKTAVLNLLKRFPLYKGLAY.

Residues L111 and G115 to L117 contribute to the (6S)-5,6,7,8-tetrahydrofolate site. N6-(pyridoxal phosphate)lysine is present on K220. S340–F342 contacts (6S)-5,6,7,8-tetrahydrofolate.

Belongs to the SHMT family. Homodimer. Pyridoxal 5'-phosphate serves as cofactor.

It localises to the cytoplasm. The enzyme catalyses (6R)-5,10-methylene-5,6,7,8-tetrahydrofolate + glycine + H2O = (6S)-5,6,7,8-tetrahydrofolate + L-serine. It functions in the pathway one-carbon metabolism; tetrahydrofolate interconversion. It participates in amino-acid biosynthesis; glycine biosynthesis; glycine from L-serine: step 1/1. Its function is as follows. Catalyzes the reversible interconversion of serine and glycine with tetrahydrofolate (THF) serving as the one-carbon carrier. This reaction serves as the major source of one-carbon groups required for the biosynthesis of purines, thymidylate, methionine, and other important biomolecules. Also exhibits THF-independent aldolase activity toward beta-hydroxyamino acids, producing glycine and aldehydes, via a retro-aldol mechanism. This chain is Serine hydroxymethyltransferase, found in Mycoplasma genitalium (strain ATCC 33530 / DSM 19775 / NCTC 10195 / G37) (Mycoplasmoides genitalium).